The primary structure comprises 275 residues: Low affinity immunoglobulin gamma Fc region receptor III-A (275 aa).

Positions 1–23 are cleaved as a signal peptide; sequence MSVWTSRKAAEDNDTSLSSGIRA. At 24 to 207 the chain is on the extracellular side; sequence GLQKAVVTLH…SPSTFPPWHQ (184 aa). Ig-like C2-type domains are found at residues 28 to 92 and 101 to 192; these read AVVT…YTCQ and PVNL…LRIT. Disulfide bonds link Cys-49–Cys-91 and Cys-131–Cys-175. N-linked (GlcNAc...) asparagine glycosylation is found at Asn-65, Asn-168, and Asn-183. A helical membrane pass occupies residues 208–228; sequence ITFCLLIGLLFTIDTVMYFSV. At 229-275 the chain is on the cytoplasmic side; the sequence is QKGLRRSTADYEEPEVHWSKEPENKTISEEKQSFRSSRANSETPENR. The segment at 237-275 is disordered; it reads ADYEEPEVHWSKEPENKTISEEKQSFRSSRANSETPENR. Tyr-239 is subject to Phosphotyrosine. A compositionally biased stretch (basic and acidic residues) spans 242–261; that stretch reads PEVHWSKEPENKTISEEKQS. The segment covering 262–275 has biased composition (polar residues); it reads FRSSRANSETPENR.

As to quaternary structure, forms a heterooligomeric complex with ITAM-containing signaling subunits FCER1G. Interacts (via transmembrane domain) with signaling subunits; this interaction is a prerequisite for receptor complex expression on the cell surface and intracellular signal transduction. Binds the Fc region of antigen-complexed IgG. In terms of processing, N-glycosylated. Post-translationally, phosphorylated following receptor ligation.

The protein resides in the cell membrane. Receptor for the invariable Fc fragment of immunoglobulin gamma (IgG). Binds with intermediate affinity to both IgG2a and IgG2b. Can bind to IgG2a and IgG2b monomers. Does not display binding to IgG1 or IgG3. Recognizes neutralizing virus-specific IgGs displayed on the cell surface of infected cells and triggers antibody-dependent cellular cytotoxicity (ADCC). Confers protection to lethal influenza virus infection. On splenic dendritic cells, uptakes antigen immune complexes and efficiently divert them into MHC class I and II antigen presentation pathways to provide for superior priming of CD4-positive and CD8-positive T cell immune responses. Mediates neutrophil activation by IgG complexes redundantly with FCGR2A. Plays a role in promoting bone resorption by enhancing osteoclast differentiation following binding to IgG2a. Also acts as a receptor for the Fc region of immunoglobulin epsilon (IgE). Binds with low affinity to both the a and b allotypes of IgE. Has also been shown to bind to IgE allotype a only but not to allotype b. Binds aggregated IgE but not the monomeric form and bound monomeric IgG is readily displaced by IgE complexes. Binding to IgE promotes macrophage-mediated phagocytosis, antigen presentation to T cells, production of pro-inflammatory cytokines and the late phase of cutaneous allergic reactions. Mediates enhanced ADCC in response to afucosylated IgGs. The chain is Low affinity immunoglobulin gamma Fc region receptor III-A from Cricetulus griseus (Chinese hamster).